Here is a 407-residue protein sequence, read N- to C-terminus: O-antigen polymerase (407 aa).

A run of 11 helical transmembrane segments spans residues 2-22, 31-51, 63-83, 101-121, 141-161, 168-185, 190-204, 211-231, 319-339, 356-376, and 382-402; these read LIIS…TLSV, VMVP…GIFV, YLFF…SYLY, YVFT…PVLM, YGIY…CAFF, LFCI…FLHG, IFSI…LSYI, FMFL…FFAY, ADFG…KGVL, FIMF…GWLF, and IAFM…RFVL.

The protein localises to the cell inner membrane. It carries out the reaction n lipid-linked O-antigen repeat units = a lipid-linked O antigen + (n-1) polyisoprenyl diphosphate.. It participates in bacterial outer membrane biogenesis; LPS O-antigen biosynthesis. Polymerase involved in the biosynthesis of the lipopolysaccharide (LPS). Catalyzes the polymerization of the O-antigen repeat units on the periplasmic face of the inner membrane, leading to the formation of the lipid-linked O-antigen molecule. The polypeptide is O-antigen polymerase (rfc) (Salmonella typhi).